The primary structure comprises 101 residues: Small ribosomal subunit protein uS14 (101 aa).

Positions 53–72 (RDAAAVRVRNRDSHDGRPRG) are disordered. Positions 61-70 (RNRDSHDGRP) are enriched in basic and acidic residues.

Belongs to the universal ribosomal protein uS14 family. Part of the 30S ribosomal subunit. Contacts proteins S3 and S10.

In terms of biological role, binds 16S rRNA, required for the assembly of 30S particles and may also be responsible for determining the conformation of the 16S rRNA at the A site. The protein is Small ribosomal subunit protein uS14 of Corynebacterium glutamicum (strain ATCC 13032 / DSM 20300 / JCM 1318 / BCRC 11384 / CCUG 27702 / LMG 3730 / NBRC 12168 / NCIMB 10025 / NRRL B-2784 / 534).